A 194-amino-acid chain; its full sequence is Orotate phosphoribosyltransferase (194 aa).

116–124 (EDIVTTGLS) lines the 5-phospho-alpha-D-ribose 1-diphosphate pocket. Residues threonine 120 and arginine 148 each contribute to the orotate site.

The protein belongs to the purine/pyrimidine phosphoribosyltransferase family. PyrE subfamily. As to quaternary structure, homodimer. Mg(2+) is required as a cofactor.

It carries out the reaction orotidine 5'-phosphate + diphosphate = orotate + 5-phospho-alpha-D-ribose 1-diphosphate. The protein operates within pyrimidine metabolism; UMP biosynthesis via de novo pathway; UMP from orotate: step 1/2. Its function is as follows. Catalyzes the transfer of a ribosyl phosphate group from 5-phosphoribose 1-diphosphate to orotate, leading to the formation of orotidine monophosphate (OMP). This Phenylobacterium zucineum (strain HLK1) protein is Orotate phosphoribosyltransferase.